The chain runs to 204 residues: Urease accessory protein UreG (204 aa).

15–22 (GPVGSGKT) is a binding site for GTP.

This sequence belongs to the SIMIBI class G3E GTPase family. UreG subfamily. As to quaternary structure, homodimer. UreD, UreF and UreG form a complex that acts as a GTP-hydrolysis-dependent molecular chaperone, activating the urease apoprotein by helping to assemble the nickel containing metallocenter of UreC. The UreE protein probably delivers the nickel.

The protein resides in the cytoplasm. Its function is as follows. Facilitates the functional incorporation of the urease nickel metallocenter. This process requires GTP hydrolysis, probably effectuated by UreG. In Methylobacterium nodulans (strain LMG 21967 / CNCM I-2342 / ORS 2060), this protein is Urease accessory protein UreG.